The chain runs to 464 residues: Argininosuccinate lyase (464 aa).

The protein belongs to the lyase 1 family. Argininosuccinate lyase subfamily.

It localises to the cytoplasm. The catalysed reaction is 2-(N(omega)-L-arginino)succinate = fumarate + L-arginine. It functions in the pathway amino-acid biosynthesis; L-arginine biosynthesis; L-arginine from L-ornithine and carbamoyl phosphate: step 3/3. The polypeptide is Argininosuccinate lyase (Stutzerimonas stutzeri (strain A1501) (Pseudomonas stutzeri)).